The following is a 206-amino-acid chain: Ribosomal RNA large subunit methyltransferase E (206 aa).

Gly-60, Trp-62, Asp-80, Asp-96, and Asp-121 together coordinate S-adenosyl-L-methionine. The active-site Proton acceptor is the Lys-161.

This sequence belongs to the class I-like SAM-binding methyltransferase superfamily. RNA methyltransferase RlmE family.

It is found in the cytoplasm. It catalyses the reaction uridine(2552) in 23S rRNA + S-adenosyl-L-methionine = 2'-O-methyluridine(2552) in 23S rRNA + S-adenosyl-L-homocysteine + H(+). In terms of biological role, specifically methylates the uridine in position 2552 of 23S rRNA at the 2'-O position of the ribose in the fully assembled 50S ribosomal subunit. This is Ribosomal RNA large subunit methyltransferase E from Nitrosomonas europaea (strain ATCC 19718 / CIP 103999 / KCTC 2705 / NBRC 14298).